A 495-amino-acid chain; its full sequence is UDP-glycosyltransferase 73C13 (495 aa).

The active-site Proton acceptor is the His24. Position 24 (His24) interacts with an anthocyanidin. Asp129 (charge relay) is an active-site residue. UDP-alpha-D-glucose-binding residues include Ala356, Gln358, His373, Trp376, Asn377, Ser378, and Glu381. Ala396 is a binding site for an anthocyanidin. Positions 397 and 398 each coordinate UDP-alpha-D-glucose.

Belongs to the UDP-glycosyltransferase family.

The enzyme catalyses oleanolate + UDP-alpha-D-glucose = oleanolate 3-O-beta-D-glucoside + UDP + H(+). Functionally, catalyzes the transfer of a glucose (Glc) moiety from UDP-Glc to the C-3 position of the oleanane sapogenins oleanolate and hederagenin, and to the C-28 carboxylic group of the lupane sapogenin betulinate. The monoglucosylated hederagenin 3-O-beta-D-glucoside is a feeding deterrent of the yellow-striped flea beetle (Phyllotreta nemorum). In Barbarea vulgaris (Yellow rocket), this protein is UDP-glycosyltransferase 73C13.